The primary structure comprises 545 residues: CTP synthase (545 aa).

Residues M1–L266 form an amidoligase domain region. S14 contacts CTP. S14 contributes to the UTP binding site. Residues S15 to I20 and D72 each bind ATP. Positions 72 and 140 each coordinate Mg(2+). CTP-binding positions include D147–E149, K187–Q192, and K223. UTP contacts are provided by residues K187–Q192 and K223. R239 to V241 serves as a coordination point for ATP. In terms of domain architecture, Glutamine amidotransferase type-1 spans T291–E542. G352 is a binding site for L-glutamine. The Nucleophile; for glutamine hydrolysis role is filled by C379. L-glutamine-binding positions include L380–Q383, E403, and R470. Residues H515 and E517 contribute to the active site.

It belongs to the CTP synthase family. As to quaternary structure, homotetramer.

The catalysed reaction is UTP + L-glutamine + ATP + H2O = CTP + L-glutamate + ADP + phosphate + 2 H(+). The enzyme catalyses L-glutamine + H2O = L-glutamate + NH4(+). It carries out the reaction UTP + NH4(+) + ATP = CTP + ADP + phosphate + 2 H(+). It functions in the pathway pyrimidine metabolism; CTP biosynthesis via de novo pathway; CTP from UDP: step 2/2. With respect to regulation, allosterically activated by GTP, when glutamine is the substrate; GTP has no effect on the reaction when ammonia is the substrate. The allosteric effector GTP functions by stabilizing the protein conformation that binds the tetrahedral intermediate(s) formed during glutamine hydrolysis. Inhibited by the product CTP, via allosteric rather than competitive inhibition. Its function is as follows. Catalyzes the ATP-dependent amination of UTP to CTP with either L-glutamine or ammonia as the source of nitrogen. Regulates intracellular CTP levels through interactions with the four ribonucleotide triphosphates. This is CTP synthase from Idiomarina loihiensis (strain ATCC BAA-735 / DSM 15497 / L2-TR).